We begin with the raw amino-acid sequence, 271 residues long: Formamidopyrimidine-DNA glycosylase (271 aa).

The Schiff-base intermediate with DNA role is filled by Pro2. The active-site Proton donor is Glu3. Residue Lys56 is the Proton donor; for beta-elimination activity of the active site. His89, Arg107, and Lys151 together coordinate DNA. The FPG-type zinc-finger motif lies at 236–270 (NVYGRAGLQCRQCGTPVRLSRQGQRSTYFCPHCQR). Catalysis depends on Arg260, which acts as the Proton donor; for delta-elimination activity.

The protein belongs to the FPG family. As to quaternary structure, monomer. It depends on Zn(2+) as a cofactor.

The enzyme catalyses Hydrolysis of DNA containing ring-opened 7-methylguanine residues, releasing 2,6-diamino-4-hydroxy-5-(N-methyl)formamidopyrimidine.. It catalyses the reaction 2'-deoxyribonucleotide-(2'-deoxyribose 5'-phosphate)-2'-deoxyribonucleotide-DNA = a 3'-end 2'-deoxyribonucleotide-(2,3-dehydro-2,3-deoxyribose 5'-phosphate)-DNA + a 5'-end 5'-phospho-2'-deoxyribonucleoside-DNA + H(+). Its function is as follows. Involved in base excision repair of DNA damaged by oxidation or by mutagenic agents. Acts as a DNA glycosylase that recognizes and removes damaged bases. Has a preference for oxidized purines, such as 7,8-dihydro-8-oxoguanine (8-oxoG). Has AP (apurinic/apyrimidinic) lyase activity and introduces nicks in the DNA strand. Cleaves the DNA backbone by beta-delta elimination to generate a single-strand break at the site of the removed base with both 3'- and 5'-phosphates. The protein is Formamidopyrimidine-DNA glycosylase of Acidovorax ebreus (strain TPSY) (Diaphorobacter sp. (strain TPSY)).